Here is a 159-residue protein sequence, read N- to C-terminus: Endoribonuclease YbeY (159 aa).

The Zn(2+) site is built by His114, His118, and His124.

The protein belongs to the endoribonuclease YbeY family. It depends on Zn(2+) as a cofactor.

The protein resides in the cytoplasm. In terms of biological role, single strand-specific metallo-endoribonuclease involved in late-stage 70S ribosome quality control and in maturation of the 3' terminus of the 16S rRNA. This is Endoribonuclease YbeY from Pectobacterium carotovorum subsp. carotovorum (strain PC1).